The following is a 173-amino-acid chain: Disulfide bond formation protein B (173 aa).

The Cytoplasmic portion of the chain corresponds to 1 to 14 (MIEFLRRIAAHRLA). The helical transmembrane segment at 15 to 31 (WSLLAASALFLELSALF) threads the bilayer. Residues 32–49 (FQHVLGLHPCVMCVYERI) are Periplasmic-facing. Residues cysteine 41 and cysteine 44 are joined by a disulfide bond. Residues 50–65 (ATLGVLTAGLLGMVAP) traverse the membrane as a helical segment. Topologically, residues 66–72 (QKWYVRW) are cytoplasmic. A helical membrane pass occupies residues 73 to 90 (SALLLWGSSAFWGLKLAL). Residues 91 to 145 (KHVDYQVNPSPFNVCEGFVDFPSWAPLDQWIPWMFYPDGDCSEVTWQFLSFSMPQ) are Periplasmic-facing. Residues cysteine 105 and cysteine 131 are joined by a disulfide bond. Residues 146-164 (WLVAIFAVYLLVFVVVAIG) form a helical membrane-spanning segment. Over 165 to 173 (NLVKGRCCS) the chain is Cytoplasmic.

This sequence belongs to the DsbB family.

It localises to the cell inner membrane. In terms of biological role, required for disulfide bond formation in some periplasmic proteins. Acts by oxidizing the DsbA protein. This Aeromonas hydrophila subsp. hydrophila (strain ATCC 7966 / DSM 30187 / BCRC 13018 / CCUG 14551 / JCM 1027 / KCTC 2358 / NCIMB 9240 / NCTC 8049) protein is Disulfide bond formation protein B.